The following is a 533-amino-acid chain: Na(+)/H(+) antiporter NhaB (533 aa).

The next 11 membrane-spanning stretches (helical) occupy residues Ile-10–Ile-30, Pro-67–Leu-87, Leu-98–Phe-118, Val-131–Ile-165, Leu-209–Pro-229, Ile-247–Val-267, Ala-310–Ile-330, Glu-355–Ile-375, Leu-396–Gly-416, Ala-454–Ile-474, and Met-481–Gln-501.

It belongs to the NhaB Na(+)/H(+) (TC 2.A.34) antiporter family.

It localises to the cell inner membrane. The enzyme catalyses 2 Na(+)(in) + 3 H(+)(out) = 2 Na(+)(out) + 3 H(+)(in). In terms of biological role, na(+)/H(+) antiporter that extrudes sodium in exchange for external protons. This is Na(+)/H(+) antiporter NhaB from Shewanella sp. (strain ANA-3).